The primary structure comprises 332 residues: GTP 3',8-cyclase (332 aa).

One can recognise a Radical SAM core domain in the interval 7 to 221 (QYERLHDYVR…FDLCKQAGLD (215 aa)). Arg-16 provides a ligand contact to GTP. Cys-23 and Cys-27 together coordinate [4Fe-4S] cluster. Tyr-29 provides a ligand contact to S-adenosyl-L-methionine. Cys-30 provides a ligand contact to [4Fe-4S] cluster. Arg-66 is a binding site for GTP. Residue Gly-70 coordinates S-adenosyl-L-methionine. Thr-97 provides a ligand contact to GTP. Residue Ser-121 participates in S-adenosyl-L-methionine binding. Lys-158 contacts GTP. S-adenosyl-L-methionine is bound at residue Met-192. [4Fe-4S] cluster contacts are provided by Cys-256 and Cys-259. Residue 261 to 263 (RLR) coordinates GTP. Cys-273 is a [4Fe-4S] cluster binding site.

This sequence belongs to the radical SAM superfamily. MoaA family. In terms of assembly, monomer and homodimer. Requires [4Fe-4S] cluster as cofactor.

It catalyses the reaction GTP + AH2 + S-adenosyl-L-methionine = (8S)-3',8-cyclo-7,8-dihydroguanosine 5'-triphosphate + 5'-deoxyadenosine + L-methionine + A + H(+). It functions in the pathway cofactor biosynthesis; molybdopterin biosynthesis. In terms of biological role, catalyzes the cyclization of GTP to (8S)-3',8-cyclo-7,8-dihydroguanosine 5'-triphosphate. The chain is GTP 3',8-cyclase from Limosilactobacillus fermentum (strain NBRC 3956 / LMG 18251) (Lactobacillus fermentum).